The primary structure comprises 78 residues: Acyl carrier protein (78 aa).

The 76-residue stretch at 2-77 folds into the Carrier domain; it reads STIEERVKKI…AAIDYVNSHK (76 aa). Residue Ser-37 is modified to O-(pantetheine 4'-phosphoryl)serine.

This sequence belongs to the acyl carrier protein (ACP) family. In terms of processing, 4'-phosphopantetheine is transferred from CoA to a specific serine of apo-ACP by AcpS. This modification is essential for activity because fatty acids are bound in thioester linkage to the sulfhydryl of the prosthetic group.

The protein resides in the cytoplasm. It functions in the pathway lipid metabolism; fatty acid biosynthesis. Functionally, carrier of the growing fatty acid chain in fatty acid biosynthesis. The protein is Acyl carrier protein of Pseudomonas putida (strain GB-1).